The chain runs to 485 residues: Adenosylhomocysteinase (485 aa).

Substrate contacts are provided by threonine 64, aspartate 139, and glutamate 205. 206 to 208 serves as a coordination point for NAD(+); that stretch reads TTT. Residues lysine 235 and aspartate 239 each coordinate substrate. NAD(+) is bound by residues asparagine 240, 269–274, glutamate 292, asparagine 327, 348–350, and asparagine 397; these read GYGDVG and IGH.

Belongs to the adenosylhomocysteinase family. Homotetramer. The cofactor is NAD(+).

The enzyme catalyses S-adenosyl-L-homocysteine + H2O = L-homocysteine + adenosine. It functions in the pathway amino-acid biosynthesis; L-homocysteine biosynthesis; L-homocysteine from S-adenosyl-L-homocysteine: step 1/1. Its function is as follows. Adenosylhomocysteine is a competitive inhibitor of S-adenosyl-L-methionine-dependent methyl transferase reactions; therefore adenosylhomocysteinase may play a key role in the control of methylations via regulation of the intracellular concentration of adenosylhomocysteine. The polypeptide is Adenosylhomocysteinase (SAHH) (Triticum aestivum (Wheat)).